Here is a 264-residue protein sequence, read N- to C-terminus: Low molecular mass lipoprotein PBMHP-12 (264 aa).

The first 16 residues, 1 to 16, serve as a signal peptide directing secretion; that stretch reads MKLLVVFAMCVPAASA.

This sequence belongs to the 30 kDa lipoprotein family.

Its subcellular location is the secreted. This chain is Low molecular mass lipoprotein PBMHP-12, found in Bombyx mori (Silk moth).